A 288-amino-acid chain; its full sequence is General transcription factor IIE subunit 2 (288 aa).

The segment at 16–56 (ALTTPAVEKRPSASSESSKKKRAKLELSSTSGSKPSSDGSN) is disordered. Residues 41–56 (ELSSTSGSKPSSDGSN) are compositionally biased toward low complexity. Positions 63–143 (SLSGSSGYKF…YAFKPKYNLK (81 aa)) form a DNA-binding region, TFIIE beta.

The protein belongs to the TFIIE beta subunit family. In terms of assembly, tetramer of two alpha and two beta chains.

Its subcellular location is the nucleus. Functionally, recruits TFIIH to the initiation complex and stimulates the RNA polymerase II C-terminal domain kinase and DNA-dependent ATPase activities of TFIIH. Both TFIIH and TFIIE are required for promoter clearance by RNA polymerase. The chain is General transcription factor IIE subunit 2 (gtf2e2) from Xenopus laevis (African clawed frog).